Here is a 498-residue protein sequence, read N- to C-terminus: Polyamine aminopropyltransferase (498 aa).

The next 6 membrane-spanning stretches (helical) occupy residues 7-27, 35-55, 67-87, 97-117, 134-154, and 163-183; these read ISVL…GTIA, VTQF…GSWL, FLEI…ILYL, IPLF…IPVL, VLSL…IFFA, and GFIF…VLPL. Residues 196 to 446 are spermidine synthase; it reads VVVLTLLILG…AGQRPIQFKK (251 aa). The region spanning 200-439 is the PABS domain; it reads TLLILGFSYS…GEWGFVLAGQ (240 aa). Position 234 (Q234) interacts with S-methyl-5'-thioadenosine. Spermidine contacts are provided by H264 and D288. Residues D308 and 342-343 contribute to the S-methyl-5'-thioadenosine site; that span reads DA. D360 acts as the Proton acceptor in catalysis.

It belongs to the spermidine/spermine synthase family. Homodimer or homotetramer.

The protein resides in the cell membrane. It carries out the reaction S-adenosyl 3-(methylsulfanyl)propylamine + putrescine = S-methyl-5'-thioadenosine + spermidine + H(+). Its pathway is amine and polyamine biosynthesis; spermidine biosynthesis; spermidine from putrescine: step 1/1. Catalyzes the irreversible transfer of a propylamine group from the amino donor S-adenosylmethioninamine (decarboxy-AdoMet) to putrescine (1,4-diaminobutane) to yield spermidine. This chain is Polyamine aminopropyltransferase, found in Leptospira interrogans serogroup Icterohaemorrhagiae serovar copenhageni (strain Fiocruz L1-130).